The primary structure comprises 675 residues: Methionine--tRNA ligase (675 aa).

Residues 15 to 25 (PYANGSIHLGH) carry the 'HIGH' region motif. Zn(2+) contacts are provided by Cys-146, Cys-149, Cys-159, and Cys-162. The 'KMSKS' region signature appears at 332–336 (KMSKS). Residue Lys-335 coordinates ATP. A tRNA-binding domain is found at 573–675 (DFAKVDMRIA…SGAQPGMQVK (103 aa)).

It belongs to the class-I aminoacyl-tRNA synthetase family. MetG type 1 subfamily. As to quaternary structure, homodimer. It depends on Zn(2+) as a cofactor.

Its subcellular location is the cytoplasm. It carries out the reaction tRNA(Met) + L-methionine + ATP = L-methionyl-tRNA(Met) + AMP + diphosphate. Its function is as follows. Is required not only for elongation of protein synthesis but also for the initiation of all mRNA translation through initiator tRNA(fMet) aminoacylation. This Serratia proteamaculans (strain 568) protein is Methionine--tRNA ligase.